The chain runs to 140 residues: Class I hydrophobin B (140 aa).

Positions 1-16 are cleaved as a signal peptide; the sequence is MKFLAVVSLLAATALA. Intrachain disulfides connect Cys-42–Cys-113, Cys-50–Cys-107, Cys-51–Cys-88, and Cys-114–Cys-133. The N-linked (GlcNAc...) asparagine glycan is linked to Asn-117.

It belongs to the fungal hydrophobin family. Self-assembles to form functional amyloid fibrils called rodlets. Self-assembly into fibrillar rodlets occurs spontaneously at hydrophobic:hydrophilic interfaces and the rodlets further associate laterally to form amphipathic monolayers.

The protein localises to the secreted. Its subcellular location is the spore wall. In terms of biological role, aerial growth, conidiation, and dispersal of filamentous fungi in the environment rely upon a capability of their secreting small amphipathic proteins called hydrophobins (HPBs) with low sequence identity. Class I can self-assemble into an outermost layer of rodlet bundles on aerial cell surfaces, conferring cellular hydrophobicity that supports fungal growth, development and dispersal; whereas Class II form highly ordered films at water-air interfaces through intermolecular interactions but contribute nothing to the rodlet structure. RodB is a class I hydrophobin that, unlike rodA, is not required for rodlet formation. This is Class I hydrophobin B from Aspergillus fumigatus (strain ATCC MYA-4609 / CBS 101355 / FGSC A1100 / Af293) (Neosartorya fumigata).